Consider the following 197-residue polypeptide: MEIKQAEFIISAVHPSQYPKDKRIEIAFVGRSNVGKSSLINALTNRKKLVKVSGTPGKTRLINFFLINNEFYFVDLPGYGYAKISKTEKKSWGKVVEDYLRGREELKRVILLLDCRHKPTNDDITMYKWLKYYNYNTIIVATKVDKVSKSQLFKNLKIIKDTLKPETGDEILTFSSLNKQGKEEFLKVLESVIDFYS.

The EngB-type G domain occupies 22–195 (KRIEIAFVGR…LKVLESVIDF (174 aa)). GTP contacts are provided by residues 30 to 37 (GRSNVGKS), 57 to 61 (GKTRL), 75 to 78 (DLPG), 142 to 145 (TKVD), and 174 to 176 (FSS). 2 residues coordinate Mg(2+): S37 and T59.

The protein belongs to the TRAFAC class TrmE-Era-EngA-EngB-Septin-like GTPase superfamily. EngB GTPase family. Requires Mg(2+) as cofactor.

Necessary for normal cell division and for the maintenance of normal septation. This Clostridium kluyveri (strain ATCC 8527 / DSM 555 / NBRC 12016 / NCIMB 10680 / K1) protein is Probable GTP-binding protein EngB.